Reading from the N-terminus, the 296-residue chain is 4-diphosphocytidyl-2-C-methyl-D-erythritol kinase (296 aa).

Lysine 18 is a catalytic residue. ATP is bound at residue 103 to 113 (PHGAGLGGGSS). Aspartate 146 is a catalytic residue.

Belongs to the GHMP kinase family. IspE subfamily.

It catalyses the reaction 4-CDP-2-C-methyl-D-erythritol + ATP = 4-CDP-2-C-methyl-D-erythritol 2-phosphate + ADP + H(+). It functions in the pathway isoprenoid biosynthesis; isopentenyl diphosphate biosynthesis via DXP pathway; isopentenyl diphosphate from 1-deoxy-D-xylulose 5-phosphate: step 3/6. In terms of biological role, catalyzes the phosphorylation of the position 2 hydroxy group of 4-diphosphocytidyl-2C-methyl-D-erythritol. This is 4-diphosphocytidyl-2-C-methyl-D-erythritol kinase from Solidesulfovibrio magneticus (strain ATCC 700980 / DSM 13731 / RS-1) (Desulfovibrio magneticus).